Reading from the N-terminus, the 134-residue chain is Profilin-1 (134 aa).

Cysteine 13 and cysteine 118 are disulfide-bonded. Positions alanine 84–threonine 100 match the Involved in PIP2 interaction motif. Threonine 114 is modified (phosphothreonine).

This sequence belongs to the profilin family. In terms of assembly, occurs in many kinds of cells as a complex with monomeric actin in a 1:1 ratio. Post-translationally, phosphorylated by MAP kinases.

The protein resides in the cytoplasm. It is found in the cytoskeleton. In terms of biological role, binds to actin and affects the structure of the cytoskeleton. At high concentrations, profilin prevents the polymerization of actin, whereas it enhances it at low concentrations. The chain is Profilin-1 from Olea europaea (Common olive).